A 227-amino-acid polypeptide reads, in one-letter code: Adenylate kinase (227 aa).

21-26 lines the ATP pocket; the sequence is GAGKGT. Residues 41 to 70 form an NMP region; sequence ATGDMLRSQVAKQTPLGIEAKKIMDDGKLV. Residues T42, R47, 68–70, 97–100, and Q104 each bind AMP; these read KLV and GFPR. The tract at residues 138-175 is LID; the sequence is GRLVHPASGRSYHKVFNPPKTEMKDDITGEDLVQRSDD. Residues R139 and 148–149 contribute to the ATP site; that span reads SY. R172 and R183 together coordinate AMP. Q211 contributes to the ATP binding site.

It belongs to the adenylate kinase family. AK2 subfamily. Monomer.

The protein resides in the cytoplasm. The protein localises to the cytosol. It localises to the mitochondrion intermembrane space. The enzyme catalyses AMP + ATP = 2 ADP. In terms of biological role, catalyzes the reversible transfer of the terminal phosphate group between ATP and AMP. Plays an important role in cellular energy homeostasis and in adenine nucleotide metabolism. Adenylate kinase activity is critical for regulation of the phosphate utilization and the AMP de novo biosynthesis pathways. In Kluyveromyces lactis (strain ATCC 8585 / CBS 2359 / DSM 70799 / NBRC 1267 / NRRL Y-1140 / WM37) (Yeast), this protein is Adenylate kinase.